The chain runs to 80 residues: Putative UPF0377 protein YMR324C (80 aa).

Residues 13 to 33 (ACIFIDSVCEGIVFWGLCLFV) form a helical membrane-spanning segment.

Belongs to the UPF0377 family.

Its subcellular location is the membrane. The chain is Putative UPF0377 protein YMR324C from Saccharomyces cerevisiae (strain ATCC 204508 / S288c) (Baker's yeast).